The primary structure comprises 216 residues: Uracil phosphoribosyltransferase (216 aa).

5-phospho-alpha-D-ribose 1-diphosphate is bound by residues Arg85, Arg110, and 136 to 144; that span reads DPMLATGNS. Uracil contacts are provided by residues Ile201 and 206–208; that span reads GDA. Asp207 contributes to the 5-phospho-alpha-D-ribose 1-diphosphate binding site.

This sequence belongs to the UPRTase family. Mg(2+) is required as a cofactor.

The catalysed reaction is UMP + diphosphate = 5-phospho-alpha-D-ribose 1-diphosphate + uracil. It functions in the pathway pyrimidine metabolism; UMP biosynthesis via salvage pathway; UMP from uracil: step 1/1. Its activity is regulated as follows. Allosterically activated by GTP. Functionally, catalyzes the conversion of uracil and 5-phospho-alpha-D-ribose 1-diphosphate (PRPP) to UMP and diphosphate. In Rhodospirillum centenum (strain ATCC 51521 / SW), this protein is Uracil phosphoribosyltransferase.